The following is a 276-amino-acid chain: Glutathione S-transferase-like protein ustS (276 aa).

In terms of domain architecture, GST N-terminal spans 16-109 (STLPGTSKSW…HLDETYPDPP (94 aa)).

This sequence belongs to the GST superfamily.

Its pathway is mycotoxin biosynthesis. Its function is as follows. Glutathione S-transferase-like protein; part of the gene cluster that mediates the biosynthesis of the secondary metabolite ustiloxin B, an antimitotic tetrapeptide. First, ustA is processed by the subtilisin-like endoprotease Kex2 that is outside the ustiloxin B gene cluster, at the C-terminal side of Arg-Lys, after transfer to Golgi apparatus through the endoplasmic reticulum (ER). Cleavage by KEX2 generates 16 peptides YAIG-I to YAIG-XVI. To process the precursor peptide further, at least two peptidases are necessary to cleave the N-terminal and C-terminal sides of the Tyr-Ala-Ile-Gly core peptide which serves as backbone for the synthesis of ustiloxin B, through cyclization and modification of the tyrosine with a non-protein coding amino acid, norvaline. One of the two peptidases must be the serine peptidase ustP; and the other pepdidase is probably ustH. Macrocyclization of the core peptide derived from ustA requires the tyrosinase ustQ, as well as the homologous oxidases ustYa and ustYb, and leads to the production of the first cyclization product N-desmethylustiloxin F. For the formation of N-desmethylustiloxin F, three oxidation steps are required, hydroxylation at the benzylic position, hydroxylation at either the aromatic ring of Tyr or beta-position of Ile, and oxidative cyclization. UstQ may catalyze the oxidation of a phenol moiety, whereas the ustYa and ustYb are most likely responsible for the remaining two-step oxidations. N-desmethylustiloxin F is then methylated by ustM to yield ustiloxin F which in turn substrate of the cytochrome P450 monooxygenase ustC which catalyzes the formation of S-deoxyustiloxin H. The flavoprotein monooxygenases ustF1 and ustF2 then participate in the modification of the side chain of S-deoxyustiloxin H, leading to the synthesis of an oxime intermediate, via ustiloxin H. Finally, carboxylative dehydration performed by the cysteine desulfurase-like protein ustD yields ustiloxin B. The sequence is that of Glutathione S-transferase-like protein ustS from Aspergillus flavus (strain ATCC 200026 / FGSC A1120 / IAM 13836 / NRRL 3357 / JCM 12722 / SRRC 167).